The chain runs to 144 residues: Large ribosomal subunit protein uL16 (144 aa).

This sequence belongs to the universal ribosomal protein uL16 family. As to quaternary structure, part of the 50S ribosomal subunit.

In terms of biological role, binds 23S rRNA and is also seen to make contacts with the A and possibly P site tRNAs. In Halothermothrix orenii (strain H 168 / OCM 544 / DSM 9562), this protein is Large ribosomal subunit protein uL16.